The sequence spans 187 residues: MATWGRRRAGLGGRERVTLSAGECYIVHEIYNGENAQDQFEYELEQALEAQYKYIVIEPTRIGDETARWVTVGNCLHKTAVLSGTACLLTPLALPAEYSHYVSLPAGVLSLACSTLYGISWQFDPCCKYQVEYDAYKLSRLPLHTLTSSSPVVLVRKDDIHRKRLHNTIALAALAYCIKKLYELYSV.

2 consecutive transmembrane segments (helical) span residues 79-95 and 102-119; these read TAVL…LALP and VSLP…LYGI.

This sequence belongs to the TMEM11 family.

The protein resides in the mitochondrion inner membrane. In terms of biological role, plays a role in mitochondrial morphogenesis. This Xenopus laevis (African clawed frog) protein is Transmembrane protein 11-A, mitochondrial (tmem11-a).